The sequence spans 350 residues: N-acetyllactosaminide beta-1,3-N-acetylglucosaminyltransferase 4 (350 aa).

Topologically, residues 1–4 (MLPR) are cytoplasmic. The helical; Signal-anchor for type II membrane protein transmembrane segment at 5–25 (LGCVLFCSLVVLLLSCLLLLK) threads the bilayer. The Lumenal segment spans residues 26-350 (ERIPAGSSKA…RLKCAATHKP (325 aa)). N-linked (GlcNAc...) asparagine glycosylation is found at Asn-53 and Asn-166.

The protein belongs to the glycosyltransferase 31 family.

It localises to the golgi apparatus membrane. It carries out the reaction a beta-D-galactosyl-(1-&gt;4)-N-acetyl-beta-D-glucosaminyl derivative + UDP-N-acetyl-alpha-D-glucosamine = an N-acetyl-beta-D-glucosaminyl-(1-&gt;3)-beta-D-galactosyl-(1-&gt;4)-N-acetyl-beta-D-glucosaminyl derivative + UDP + H(+). Its pathway is protein modification; protein glycosylation. Its function is as follows. Beta-1,3-N-acetylglucosaminyltransferase involved in the synthesis of poly-N-acetyllactosamine. Has activity for type 2 oligosaccharides. The polypeptide is N-acetyllactosaminide beta-1,3-N-acetylglucosaminyltransferase 4 (B3gnt4) (Mus musculus (Mouse)).